Here is a 358-residue protein sequence, read N- to C-terminus: DnaJ homolog subfamily B member 11 (358 aa).

An N-terminal signal peptide occupies residues 1–22 (MAPQNLSTFCLLLLYLIGTVIA). Residues 25-90 (DFYKILGVPR…EKRKQYDTYG (66 aa)) enclose the J domain. At threonine 188 the chain carries Phosphothreonine. Asparagine 261 is a glycosylation site (N-linked (GlcNAc...) asparagine).

As to quaternary structure, part of a large chaperone multiprotein complex comprising DNAJB11, HSP90B1, HSPA5, HYOU, PDIA2, PDIA4, PDIA6, PPIB, SDF2L1, UGGT1 and very small amounts of ERP29, but not, or at very low levels, CALR nor CANX. Binds to denatured substrates in an ATP-independent manner. Interacts via the J domain with HSPA5 in an ATP-dependent manner. Contains high-mannose Endo H-sensitive carbohydrates. In terms of processing, cys-169, Cys-171, Cys-193 and Cys-196 form intramolecular disulfide bonds. The preferential partner for each Cys is not known.

The protein resides in the endoplasmic reticulum lumen. Functionally, as a co-chaperone for HSPA5 it is required for proper folding, trafficking or degradation of proteins. Binds directly to both unfolded proteins that are substrates for ERAD and nascent unfolded peptide chains, but dissociates from the HSPA5-unfolded protein complex before folding is completed. May help recruiting HSPA5 and other chaperones to the substrate. Stimulates HSPA5 ATPase activity. It is necessary for maturation and correct trafficking of PKD1. This Mus musculus (Mouse) protein is DnaJ homolog subfamily B member 11 (Dnajb11).